A 780-amino-acid polypeptide reads, in one-letter code: Cyclin-F (780 aa).

A Nuclear localization signal 1 motif is present at residues 20-28 (KRRIKRRPR). An F-box domain is found at 29-76 (NLTILSLPEDVLFHILKWLSVGDILAVRAVHSHLKYLVDNHASVWASA). Positions 288 to 405 (QASQAVNKQQ…EIISALEGKI (118 aa)) constitute a Cyclin N-terminal domain. Short sequence motifs (d box) lie at residues 310-313 (RYIL), 343-346 (RRRL), and 349-352 (RYKL). 3 disordered regions span residues 544 to 594 (QESP…AELS), 651 to 733 (QESS…STKP), and 745 to 780 (CRPP…FLKL). The short motif at 568–574 (RRSKRKR) is the Nuclear localization signal 2 element. Positions 582 to 761 (RGSFVTTPTA…ESGAHQQPVK (180 aa)) are PEST. Over residues 585 to 594 (FVTTPTAELS) the composition is skewed to polar residues. Composition is skewed to low complexity over residues 695–708 (SGYS…PISS) and 719–731 (STSV…HSST). Positions 762–765 (RQNL) match the D box 4 motif.

The protein belongs to the cyclin family. Cyclin AB subfamily. Component of the SCF(CCNF) complex consisting of CUL1, RBX1, SKP1 and CCNF. Interacts with SKP1. Interacts with CUL1. Interacts with CCNB1; interaction is required for nuclear localization of CCNB1. Interacts with CCP110; this interaction leads to CCP110 ubiquitination and degradation via the proteasome pathway. Interacts (via the Cyclin N-terminal domain) with MYBL2/BMYB. Interacts with FZR1/CDH1 (via N-terminus). Interacts with RRM2 (via Cy motif and when phosphorylated at 'Thr-33'); the interaction occurs exclusively in G2 and early M. Interacts with CDC6 (via Cy motif); the interaction takes place during G2 and M phase. Degraded when the spindle assembly checkpoint is activated during the G2-M transition. Degradation is not dependent on the proteasome or ubiquitin and depends on the C-terminal PEST sequence. In terms of processing, phosphorylated just before cells enter into mitosis. Post-translationally, ubiquitinated by the anaphase-promoting complex (APC/C); leading to its degradation by the proteasome.

Its subcellular location is the nucleus. It localises to the cytoplasm. The protein resides in the perinuclear region. The protein localises to the cytoskeleton. It is found in the microtubule organizing center. Its subcellular location is the centrosome. It localises to the centriole. Its function is as follows. Substrate recognition component of a SCF (SKP1-CUL1-F-box protein) E3 ubiquitin-protein ligase complex which mediates the ubiquitination and subsequent proteasomal degradation of target proteins. The SCF(CCNF) E3 ubiquitin-protein ligase complex is an integral component of the ubiquitin proteasome system (UPS) and links proteasome degradation to the cell cycle. Mediates the substrate recognition and the proteasomal degradation of various target proteins involved in the regulation of cell cycle progression and in the maintenance of genome stability. Mediates the ubiquitination and subsequent proteasomal degradation of CP110 during G2 phase, thereby acting as an inhibitor of centrosome reduplication. In G2, mediates the ubiquitination and proteasomal degradation of CDC6, thereby suppressing DNA re-replication and preventing genome instability. Involved in the ubiquitination and degradation of the substrate adapter CDH1 of the anaphase-promoting complex (APC/C), thereby acting as an antagonist of APC/C in regulating G1 progression and S phase entry. May play a role in the G2 cell cycle checkpoint control after DNA damage, possibly by promoting the ubiquitination of MYBL2/BMYB. This Rattus norvegicus (Rat) protein is Cyclin-F (Ccnf).